A 456-amino-acid chain; its full sequence is Phospholipase A1 member A (456 aa).

A signal peptide spans 1-25 (MPPDFWERCFWLWGLLLWLSVGSTG). An N-linked (GlcNAc...) asparagine glycan is attached at Asn34. Residue Ser166 is the Nucleophile of the active site. The active-site Charge relay system is the Asp190. Cys245 and Cys258 are joined by a disulfide. The Charge relay system role is filled by His260. 2 disulfide bridges follow: Cys282–Cys293 and Cys296–Cys304.

Belongs to the AB hydrolase superfamily. Lipase family.

It is found in the secreted. It carries out the reaction a 1,2-diacyl-sn-glycero-3-phospho-L-serine + H2O = a 2-acyl-sn-glycero-3-phospho-L-serine + a fatty acid + H(+). It catalyses the reaction 1,2-di-(9Z)-octadecenoyl-sn-glycero-3-phospho-L-serine + H2O = 2-(9Z-octadecenoyl)-sn-glycero-3-phospho-L-serine + (9Z)-octadecenoate + H(+). The enzyme catalyses 1-hexadecanoyl-2-(5Z,8Z,11Z,14Z-eicosatetraenoyl)-sn-glycero-3-phospho-L-serine + H2O = 2-(5Z,8Z,11Z,14Z)-eicosatetraenoyl-sn-glycero-3-phospho-L-serine + hexadecanoate + H(+). The catalysed reaction is a 1-acyl-sn-glycero-3-phospho-L-serine + H2O = sn-glycero-3-phospho-L-serine + a fatty acid + H(+). It carries out the reaction 1-(9Z-octadecenoyl)-sn-glycero-3-phospho-L-serine + H2O = sn-glycero-3-phospho-L-serine + (9Z)-octadecenoate + H(+). Its function is as follows. Hydrolyzes the ester bond of the acyl group attached at the sn-1 position of phosphatidylserines (phospholipase A1 activity) and 1-acyl-2-lysophosphatidylserines (lysophospholipase activity) in the pathway of phosphatidylserines acyl chain remodeling. Cleaves phosphatidylserines exposed on the outer leaflet of the plasma membrane of apoptotic cells producing 2-acyl-1-lysophosphatidylserines, which in turn enhance mast cell activation and histamine production. Has no activity toward other glycerophospholipids including phosphatidylcholines, phosphatidylethanolamines, phosphatidic acids or phosphatidylinositols, or glycerolipids such as triolein. The polypeptide is Phospholipase A1 member A (PLA1A) (Bos taurus (Bovine)).